We begin with the raw amino-acid sequence, 233 residues long: DnaA regulatory inactivator Hda (233 aa).

This sequence belongs to the DnaA family. HdA subfamily. In terms of assembly, the active form seems to be an ADP-bound monomer. Forms the RIDA complex (regulatory inactivation of DnaA) of ATP-DnaA, ADP-Hda and the DNA-loaded beta sliding clamp (dnaN).

Its function is as follows. Mediates the interaction of DNA replication initiator protein DnaA with DNA polymerase subunit beta sliding clamp (dnaN). Stimulates hydrolysis of ATP-DnaA to ADP-DnaA, rendering DnaA inactive for reinitiation, a process called regulatory inhibition of DnaA or RIDA. The polypeptide is DnaA regulatory inactivator Hda (Escherichia fergusonii (strain ATCC 35469 / DSM 13698 / CCUG 18766 / IAM 14443 / JCM 21226 / LMG 7866 / NBRC 102419 / NCTC 12128 / CDC 0568-73)).